A 139-amino-acid chain; its full sequence is Large ribosomal subunit protein uL16 (139 aa).

Belongs to the universal ribosomal protein uL16 family. As to quaternary structure, part of the 50S ribosomal subunit.

Its function is as follows. Binds 23S rRNA and is also seen to make contacts with the A and possibly P site tRNAs. This is Large ribosomal subunit protein uL16 from Koribacter versatilis (strain Ellin345).